A 699-amino-acid polypeptide reads, in one-letter code: D-(-)-3-hydroxybutyrate oligomer hydrolase (699 aa).

The signal sequence occupies residues 1–33 (MTAIRGGSRRAPGLALALLGGVLLGACHGDENA). The active-site Charge relay system is Ser311.

This sequence belongs to the D-(-)-3-hydroxybutyrate oligomer hydrolase family.

It is found in the secreted. It carries out the reaction (3R)-hydroxybutanoate dimer + H2O = 2 (R)-3-hydroxybutanoate + H(+). The protein operates within lipid metabolism; butanoate metabolism. Functionally, participates in the degradation of poly-3-hydroxybutyrate (PHB). It works downstream of poly(3-hydroxybutyrate) depolymerase, hydrolyzing D(-)-3-hydroxybutyrate oligomers of various length (3HB-oligomers) into 3HB-monomers. The polypeptide is D-(-)-3-hydroxybutyrate oligomer hydrolase (Burkholderia pseudomallei (strain 1106a)).